A 594-amino-acid polypeptide reads, in one-letter code: Probable translation initiation factor IF-2 (594 aa).

The tr-type G domain occupies 5 to 224 (YRAPIVVVVG…LMAGLTQRLV (220 aa)). The segment at 14–21 (GHVDVGKT) is G1. 14–21 (GHVDVGKT) is a binding site for GTP. The G2 stretch occupies residues 39 to 43 (MITQH). Residues 80-83 (DTPG) are G3. Residues 80–84 (DTPGH) and 134–137 (NKVD) contribute to the GTP site. The interval 134 to 137 (NKVD) is G4. The G5 stretch occupies residues 202–204 (SAV).

It belongs to the TRAFAC class translation factor GTPase superfamily. Classic translation factor GTPase family. IF-2 subfamily.

Its function is as follows. Function in general translation initiation by promoting the binding of the formylmethionine-tRNA to ribosomes. Seems to function along with eIF-2. The chain is Probable translation initiation factor IF-2 from Caldivirga maquilingensis (strain ATCC 700844 / DSM 13496 / JCM 10307 / IC-167).